Reading from the N-terminus, the 451-residue chain is L,D-transpeptidase 5 (451 aa).

One can recognise a L,D-TPase catalytic domain in the interval 263-384; the sequence is QVVKAEVSSH…AVYGDPVEVT (122 aa). Substrate contacts are provided by residues tyrosine 323 and 337–338; that span reads NG. Histidine 342 serves as the catalytic Proton donor/acceptor. The active-site Nucleophile is cysteine 360. Asparagine 362 lines the substrate pocket. Residues 417–451 form a disordered region; the sequence is AAKPAATQIPVTAPVTPSDAPTPSGTPTTTNGPGG. Positions 437–451 are enriched in low complexity; it reads PTPSGTPTTTNGPGG.

It functions in the pathway cell wall biogenesis; peptidoglycan biosynthesis. Its activity is regulated as follows. In contrast to other LDT paralogs, LdtMt5 is not inactivated by the beta-lactam carbapenems; beta-lactam carbapenems form covalent adducts with other LDT paralogs but the formation of covalent adducts was not detected for LdtMt5. In terms of biological role, generates 3-&gt;3 cross-links in peptidoglycan, catalyzing the cleavage of the mDap(3)-D-Ala(4) bond of a tetrapeptide donor stem and the formation of a bond between the carbonyl of mDap(3) of the donor stem and the side chain of mDap(3) of the acceptor stem. Is specific for donor substrates containing a stem tetrapeptide since it cannot use pentapeptide stems. This Mycobacterium tuberculosis (strain ATCC 25618 / H37Rv) protein is L,D-transpeptidase 5 (lprQ).